Consider the following 75-residue polypeptide: uncharacterized protein (75 aa).

4Fe-4S ferredoxin-type domains are found at residues 2–30 and 37–68; these read SHTI…KGEG and DWYW…KEEP. Positions 10 and 16 each coordinate [3Fe-4S] cluster. The [4Fe-4S] cluster site is built by C20, C46, C49, and C52. C56 is a binding site for [3Fe-4S] cluster.

It depends on [4Fe-4S] cluster as a cofactor. Requires [3Fe-4S] cluster as cofactor.

It localises to the plastid. It is found in the chloroplast. This is an uncharacterized protein from Porphyra purpurea (Red seaweed).